We begin with the raw amino-acid sequence, 1278 residues long: NPC intracellular cholesterol transporter 1 (1278 aa).

An N-terminal signal peptide occupies residues 1-22 (MTARGLALGLLLLLLCPAQVFS). The Lumenal portion of the chain corresponds to 23-261 (QSCVWYGECG…QPPPPPAPWT (239 aa)). 9 disulfides stabilise this stretch: Cys-25-Cys-74, Cys-31-Cys-42, Cys-63-Cys-109, Cys-75-Cys-113, Cys-97-Cys-238, Cys-100-Cys-160, Cys-177-Cys-184, Cys-227-Cys-243, and Cys-240-Cys-247. Asn-41 is a cholesterol binding site. An N-linked (GlcNAc...) asparagine glycan is attached at Asn-70. Gln-79 serves as a coordination point for cholesterol. Asn-122 and Asn-135 each carry an N-linked (GlcNAc...) asparagine glycan. Residue Asn-158 is glycosylated (N-linked (GlcNAc...) asparagine; atypical). The important for cholesterol binding and cholesterol transfer from NPC1 to liposomes stretch occupies residues 175-205 (LLCGKDADACNATNWIEYMFNKDNGQAPFTI). N-linked (GlcNAc...) asparagine glycans are attached at residues Asn-185 and Asn-222. The chain crosses the membrane as a helical span at residues 262 to 282 (ILGLDAMYVIMWITYMAFLLV). The Cytoplasmic segment spans residues 283–350 (FFGAFFAVWC…RWGSFCVRNP (68 aa)). Residues 351 to 371 (GCVIFFSLVFITACSSGLVFV) form a helical membrane-spanning segment. Topologically, residues 372-620 (RVTTNPVDLW…DELNRESDSD (249 aa)) are lumenal. N-linked (GlcNAc...) asparagine glycans are attached at residues Asn-452, Asn-459, Asn-478, Asn-524, Asn-557, Asn-572, and Asn-598. 2 disulfides stabilise this stretch: Cys-468/Cys-479 and Cys-516/Cys-533. The region spanning 620–785 (DVFTVVISYA…ITCFVSLLGL (166 aa)) is the SSD domain. A helical transmembrane segment spans residues 621 to 641 (VFTVVISYAIMFLYISLALGH). The Cytoplasmic segment spans residues 642 to 653 (MKSCRRLLVDSK). A helical transmembrane segment spans residues 654–675 (VSLGIAGILIVLSSVACSLGVF). At 676 to 685 (SYIGLPLTLI) the chain is on the lumenal side. The chain crosses the membrane as a helical span at residues 686 to 706 (VIEVIPFLVLAVGVDNIFILV). Residues 707–730 (QAYQRDERLQGETLDQQLGRVLGE) lie on the Cytoplasmic side of the membrane. The helical transmembrane segment at 731 to 751 (VAPSMFLSSFSETVAFFLGAL) threads the bilayer. Residues 752–759 (SVMPAVHT) lie on the Lumenal side of the membrane. A helical transmembrane segment spans residues 760–783 (FSLFAGLAVFIDFLLQITCFVSLL). Over 784–832 (GLDIKRQEKNRLDIFCCVRGAEDGTSVQASESCLFRFFKNSYSPLLLKD) the chain is Cytoplasmic. The helical transmembrane segment at 833-853 (WMRPIVIAIFVGVLSFSIAVL) threads the bilayer. Topologically, residues 854 to 1097 (NKVDIGLDQS…YEQYLTIIDD (244 aa)) are lumenal. The cysteines at positions 909 and 914 are disulfide-linked. Asn-916, Asn-931, Asn-961, Asn-968, Asn-1064, and Asn-1072 each carry an N-linked (GlcNAc...) asparagine glycan. 3 cysteine pairs are disulfide-bonded: Cys-956–Cys-1011, Cys-957–Cys-979, and Cys-967–Cys-976. A helical membrane pass occupies residues 1098 to 1118 (TIFNLGVSLGAIFLVTMVLLG). Residues 1119–1124 (CELWSA) lie on the Cytoplasmic side of the membrane. A helical membrane pass occupies residues 1125-1145 (VIMCATIAMVLVNMFGVMWLW). Residues 1146 to 1150 (GISLN) lie on the Lumenal side of the membrane. A helical membrane pass occupies residues 1151–1171 (AVSLVNLVMSCGISVEFCSHI). Residues 1172–1194 (TRAFTVSMKGSRVERAEEALAHM) are Cytoplasmic-facing. A helical membrane pass occupies residues 1195-1215 (GSSVFSGITLTKFGGIVVLAF). The Lumenal segment spans residues 1216-1223 (AKSQIFQI). Residues 1224–1244 (FYFRMYLAMVLLGATHGLIFL) traverse the membrane as a helical segment. At 1245–1278 (PVLLSYIGPSVNKAKSCATEERYKGTERERLLNF) the chain is on the cytoplasmic side. The tract at residues 1275 to 1278 (LLNF) is required for location in lysosomes. The Di-leucine motif signature appears at 1275 to 1278 (LLNF).

This sequence belongs to the patched family. As to quaternary structure, interacts (via the second lumenal domain) with NPC2. Interacts with TMEM97; the interaction may decrease NPC1 availability to the cell. Interacts with TIM1. Interacts with SLC38A9; this interaction inhibits cholesterol-mediated mTORC1 activation via its sterol transport activity. In terms of assembly, (Microbial infection) Interacts with ebolavirus glycoprotein. Post-translationally, N-glycosylated.

It is found in the late endosome membrane. Its subcellular location is the lysosome membrane. It catalyses the reaction cholesterol(in) = cholesterol(out). Its function is as follows. Intracellular cholesterol transporter which acts in concert with NPC2 and plays an important role in the egress of cholesterol from the endosomal/lysosomal compartment. Unesterified cholesterol that has been released from LDLs in the lumen of the late endosomes/lysosomes is transferred by NPC2 to the cholesterol-binding pocket in the N-terminal domain of NPC1. Cholesterol binds to NPC1 with the hydroxyl group buried in the binding pocket. Binds oxysterol with higher affinity than cholesterol. May play a role in vesicular trafficking in glia, a process that may be crucial for maintaining the structural and functional integrity of nerve terminals. Inhibits cholesterol-mediated mTORC1 activation throught its interaction with SLC38A9. Functionally, (Microbial infection) Acts as an endosomal entry receptor for ebolavirus. The protein is NPC intracellular cholesterol transporter 1 of Homo sapiens (Human).